The primary structure comprises 436 residues: Homeobox protein PKNOX1 (436 aa).

Residues 24–49 (LKTEQDPNCSEPDVEGVSPPPVGSQT) form a disordered region. A phosphoserine mark is found at Ser-33 and Ser-41. In terms of domain architecture, MEIS N-terminal spans 80 to 163 (GSEGTTSASF…MNSETLLSGE (84 aa)). A DNA-binding region (homeobox; TALE-type) is located at residues 259–321 (SKNKRGVLPK…NARRRILQPM (63 aa)). The interval 401-436 (AEQSEDDSVDSTGDGGAALAPGHLGGLVLENSDSLQ) is disordered.

Belongs to the TALE/MEIS homeobox family. Interacts with MN1.

It is found in the nucleus. Functionally, activates transcription in the presence of PBX1A and HOXA1. The protein is Homeobox protein PKNOX1 of Bos taurus (Bovine).